We begin with the raw amino-acid sequence, 112 residues long: Probable small nuclear ribonucleoprotein Sm D2 (112 aa).

Residues 1-15 are compositionally biased toward basic and acidic residues; that stretch reads MSRMNDETMEDKPDD. The segment at 1 to 23 is disordered; sequence MSRMNDETMEDKPDDSNGPLSIL. The 87-residue stretch at 20-106 folds into the Sm domain; that stretch reads LSILMDSVNN…VILVLKNPLG (87 aa).

Belongs to the snRNP core protein family.

The protein resides in the nucleus. It is found in the cytoplasm. It localises to the cytosol. Plays a role in pre-mRNA splicing as a core component of the spliceosomal U1, U2, U4 and U5 small nuclear ribonucleoproteins (snRNPs), the building blocks of the spliceosome. The sequence is that of Probable small nuclear ribonucleoprotein Sm D2 (snrpd2) from Dictyostelium discoideum (Social amoeba).